Reading from the N-terminus, the 727-residue chain is Procollagen-lysine,2-oxoglutarate 5-dioxygenase 1 (727 aa).

A signal peptide spans 1–18 (MRPLLLLALLGWLLLAEA). N-linked (GlcNAc...) asparagine glycans are attached at residues Asn-163, Asn-197, and Asn-538. The 92-residue stretch at 636–727 (QFDLAFVVRY…RYIAVSFVDP (92 aa)) folds into the Fe2OG dioxygenase domain. 2 residues coordinate Fe cation: His-656 and Asp-658. A glycan (N-linked (GlcNAc...) asparagine) is linked at Asn-686. A Fe cation-binding site is contributed by His-708. Residue Arg-718 is part of the active site.

As to quaternary structure, homodimer. Identified in a complex with P3H3 and P3H4. It depends on Fe(2+) as a cofactor. The cofactor is L-ascorbate.

Its subcellular location is the rough endoplasmic reticulum membrane. The enzyme catalyses L-lysyl-[collagen] + 2-oxoglutarate + O2 = (5R)-5-hydroxy-L-lysyl-[collagen] + succinate + CO2. In terms of biological role, part of a complex composed of PLOD1, P3H3 and P3H4 that catalyzes hydroxylation of lysine residues in collagen alpha chains and is required for normal assembly and cross-linkling of collagen fibrils. Forms hydroxylysine residues in -Xaa-Lys-Gly- sequences in collagens. These hydroxylysines serve as sites of attachment for carbohydrate units and are essential for the stability of the intermolecular collagen cross-links. The polypeptide is Procollagen-lysine,2-oxoglutarate 5-dioxygenase 1 (PLOD1) (Homo sapiens (Human)).